The following is a 283-amino-acid chain: Tryptophan 2,3-dioxygenase (283 aa).

Substrate contacts are provided by residues 52–56 (FIIQH), Tyr114, and Arg118. Position 241 (His241) interacts with heme. Thr255 contacts substrate.

The protein belongs to the tryptophan 2,3-dioxygenase family. As to quaternary structure, homotetramer. Heme serves as cofactor.

It carries out the reaction L-tryptophan + O2 = N-formyl-L-kynurenine. It participates in amino-acid degradation; L-tryptophan degradation via kynurenine pathway; L-kynurenine from L-tryptophan: step 1/2. Heme-dependent dioxygenase that catalyzes the oxidative cleavage of the L-tryptophan (L-Trp) pyrrole ring and converts L-tryptophan to N-formyl-L-kynurenine. Catalyzes the oxidative cleavage of the indole moiety. In Pseudomonas fluorescens (strain ATCC BAA-477 / NRRL B-23932 / Pf-5), this protein is Tryptophan 2,3-dioxygenase.